A 294-amino-acid chain; its full sequence is Homoserine kinase (294 aa).

83 to 93 (PLARGLGSSAS) is a binding site for ATP.

This sequence belongs to the GHMP kinase family. Homoserine kinase subfamily.

It localises to the cytoplasm. The enzyme catalyses L-homoserine + ATP = O-phospho-L-homoserine + ADP + H(+). It functions in the pathway amino-acid biosynthesis; L-threonine biosynthesis; L-threonine from L-aspartate: step 4/5. Functionally, catalyzes the ATP-dependent phosphorylation of L-homoserine to L-homoserine phosphate. The chain is Homoserine kinase from Oceanobacillus iheyensis (strain DSM 14371 / CIP 107618 / JCM 11309 / KCTC 3954 / HTE831).